The primary structure comprises 305 residues: MSQDTVAPALPDAPREVVLVTGISGSGKSVALHALEDAGFYCVDNLPPELLPQFLRLEQARTDGAMRRIAVAVDVRSARSLPALLPSLSQLGSEGVKVRAIFLDASTHALVRRFSETRRRHPLSTGAPGEALDQHRALTDAIELERELLADLREASTVLDTSQLRAAQLRAWVRQLVQAPAGALTLVFESFAFKHGVPLDADLVYDVRVLPNPHYIDELRPLTGRDAPVADYLQQQPEVGEMLGQIEAFLVRWLPAFEQDQRAYLTVAIGCTGGQHRSVYFVEQLARRFRDRGATLVRHRELDAL.

22-29 is an ATP binding site; the sequence is GISGSGKS. 74 to 77 is a binding site for GTP; the sequence is DVRS.

This sequence belongs to the RapZ-like family.

Functionally, displays ATPase and GTPase activities. This Methylibium petroleiphilum (strain ATCC BAA-1232 / LMG 22953 / PM1) protein is Nucleotide-binding protein Mpe_A3336.